A 143-amino-acid polypeptide reads, in one-letter code: Large ribosomal subunit protein uL15 (143 aa).

2 stretches are compositionally biased toward basic residues: residues 1–13 (MIRK…KMRG) and 23–38 (KKHR…GNAG). Residues 1-38 (MIRKSKKITKMRGSRTCGYGEAKKHRGAGHRGGRGNAG) form a disordered region.

This sequence belongs to the universal ribosomal protein uL15 family. In terms of assembly, part of the 50S ribosomal subunit.

Its function is as follows. Binds to the 23S rRNA. This is Large ribosomal subunit protein uL15 from Methanococcus maripaludis (strain C5 / ATCC BAA-1333).